The following is a 364-amino-acid chain: Long-wave-sensitive opsin 1 (364 aa).

At 1 to 52 (MTQRWGPQRLAGGQPHAGLEDSTRASIFTYTNSNATRGPFEGPNYHIAPRWV) the chain is on the extracellular side. Ser-22 carries O-linked (GlcNAc) serine glycosylation. N-linked (GlcNAc...) asparagine glycosylation occurs at Asn-34. The chain crosses the membrane as a helical span at residues 53–77 (YHVTSAWMIFVVIASVFTNGLVLAA). At 78 to 89 (TMKFKKLRHPLN) the chain is on the cytoplasmic side. Residues 90 to 115 (WILVNLAVADLAETIIASTISVVNQI) form a helical membrane-spanning segment. Residues 116–129 (YGYFVLGHPMCVLE) are Extracellular-facing. A disulfide bridge links Cys-126 with Cys-203. Residues 130 to 149 (GYTVSLCGITGLWSLAIISW) form a helical membrane-spanning segment. At 150–168 (ERWLVVCKPFGNVRFDAKL) the chain is on the cytoplasmic side. Residues 169–192 (AIAGIAFSWIWAAVWTAPPIFGWS) form a helical membrane-spanning segment. At 193–218 (RYWPHGLKTSCGPDVFSGSSYPGVQS) the chain is on the extracellular side. A helical membrane pass occupies residues 219–246 (YMIVLMITCCIIPLSVIVLCYLQVWLAI). At 247–268 (RAVAKQQKESESTQKAEKEVTR) the chain is on the cytoplasmic side. Residues 269 to 292 (MVMVMIFAYCVCWGPYTFFACFAA) traverse the membrane as a helical segment. Residues 293-300 (AHPGYAFH) lie on the Extracellular side of the membrane. The chain crosses the membrane as a helical span at residues 301 to 325 (PLVAALPAYFAKSATIYNPIIYVFM). Position 312 is an N6-(retinylidene)lysine (Lys-312). Residues 326 to 364 (NRQFRNCIMQLFGKKVDDGSELSSASRTEASSVSSVSPA) lie on the Cytoplasmic side of the membrane.

The protein belongs to the G-protein coupled receptor 1 family. Opsin subfamily. Phosphorylated on some or all of the serine and threonine residues present in the C-terminal region. In terms of tissue distribution, the three color pigments are found in the cone photoreceptor cells. Expressed in retina.

Its subcellular location is the membrane. Visual pigments are the light-absorbing molecules that mediate vision. They consist of an apoprotein, opsin, covalently linked to cis-retinal. In Felis catus (Cat), this protein is Long-wave-sensitive opsin 1 (OPN1LW).